Reading from the N-terminus, the 337-residue chain is Glyceraldehyde-3-phosphate dehydrogenase (337 aa).

Residues 12-13, aspartate 34, and lysine 79 each bind NAD(+); that span reads RI. D-glyceraldehyde 3-phosphate contacts are provided by residues 150–152, threonine 181, 210–211, and arginine 233; these read SCT and TG. Cysteine 151 functions as the Nucleophile in the catalytic mechanism. Asparagine 315 contributes to the NAD(+) binding site.

Belongs to the glyceraldehyde-3-phosphate dehydrogenase family. Homotetramer.

It localises to the cytoplasm. The catalysed reaction is D-glyceraldehyde 3-phosphate + phosphate + NAD(+) = (2R)-3-phospho-glyceroyl phosphate + NADH + H(+). It functions in the pathway carbohydrate degradation; glycolysis; pyruvate from D-glyceraldehyde 3-phosphate: step 1/5. This is Glyceraldehyde-3-phosphate dehydrogenase (GPD1) from Phaeosphaeria nodorum (strain SN15 / ATCC MYA-4574 / FGSC 10173) (Glume blotch fungus).